An 85-amino-acid polypeptide reads, in one-letter code: UPF0291 protein SGO_0570 (85 aa).

The interval 56–85 (EDGNDVTPEKLRQVQREKGLHGRSLDDPNS) is disordered. Basic and acidic residues predominate over residues 62 to 85 (TPEKLRQVQREKGLHGRSLDDPNS).

The protein belongs to the UPF0291 family.

It localises to the cytoplasm. The chain is UPF0291 protein SGO_0570 from Streptococcus gordonii (strain Challis / ATCC 35105 / BCRC 15272 / CH1 / DL1 / V288).